Consider the following 139-residue polypeptide: uncharacterized protein (139 aa).

The next 3 membrane-spanning stretches (helical) occupy residues 19–39 (CIIF…FILG), 64–84 (IFNV…FNLF), and 89–109 (AITI…WILG).

It localises to the cell membrane. This is an uncharacterized protein from Methanocaldococcus jannaschii (strain ATCC 43067 / DSM 2661 / JAL-1 / JCM 10045 / NBRC 100440) (Methanococcus jannaschii).